A 246-amino-acid chain; its full sequence is Pyridoxine 5'-phosphate synthase (246 aa).

Position 6 (N6) interacts with 3-amino-2-oxopropyl phosphate. 8–9 (DH) contributes to the 1-deoxy-D-xylulose 5-phosphate binding site. Residue R17 coordinates 3-amino-2-oxopropyl phosphate. H49 serves as the catalytic Proton acceptor. 1-deoxy-D-xylulose 5-phosphate is bound by residues R51 and H56. E76 (proton acceptor) is an active-site residue. T106 contributes to the 1-deoxy-D-xylulose 5-phosphate binding site. Catalysis depends on H196, which acts as the Proton donor. Residues G197 and 219 to 220 (GH) each bind 3-amino-2-oxopropyl phosphate.

Belongs to the PNP synthase family. Homooctamer; tetramer of dimers.

The protein resides in the cytoplasm. The catalysed reaction is 3-amino-2-oxopropyl phosphate + 1-deoxy-D-xylulose 5-phosphate = pyridoxine 5'-phosphate + phosphate + 2 H2O + H(+). The protein operates within cofactor biosynthesis; pyridoxine 5'-phosphate biosynthesis; pyridoxine 5'-phosphate from D-erythrose 4-phosphate: step 5/5. In terms of biological role, catalyzes the complicated ring closure reaction between the two acyclic compounds 1-deoxy-D-xylulose-5-phosphate (DXP) and 3-amino-2-oxopropyl phosphate (1-amino-acetone-3-phosphate or AAP) to form pyridoxine 5'-phosphate (PNP) and inorganic phosphate. The chain is Pyridoxine 5'-phosphate synthase from Akkermansia muciniphila (strain ATCC BAA-835 / DSM 22959 / JCM 33894 / BCRC 81048 / CCUG 64013 / CIP 107961 / Muc).